A 502-amino-acid polypeptide reads, in one-letter code: ATP synthase subunit alpha (502 aa).

A disordered region spans residues 119–139 (GPIATTKSRPIESPAPGVMDR). 169–176 (GDRQTGKT) is a binding site for ATP.

The protein belongs to the ATPase alpha/beta chains family. F-type ATPases have 2 components, CF(1) - the catalytic core - and CF(0) - the membrane proton channel. CF(1) has five subunits: alpha(3), beta(3), gamma(1), delta(1), epsilon(1). CF(0) has three main subunits: a(1), b(2) and c(9-12). The alpha and beta chains form an alternating ring which encloses part of the gamma chain. CF(1) is attached to CF(0) by a central stalk formed by the gamma and epsilon chains, while a peripheral stalk is formed by the delta and b chains.

It localises to the cell membrane. It carries out the reaction ATP + H2O + 4 H(+)(in) = ADP + phosphate + 5 H(+)(out). Functionally, produces ATP from ADP in the presence of a proton gradient across the membrane. The alpha chain is a regulatory subunit. The sequence is that of ATP synthase subunit alpha from Alkalihalophilus pseudofirmus (strain ATCC BAA-2126 / JCM 17055 / OF4) (Bacillus pseudofirmus).